The following is a 332-amino-acid chain: Biotin synthase (332 aa).

Positions 53–282 constitute a Radical SAM core domain; sequence YFGKKVKLNM…TKEIRISGGR (230 aa). The [4Fe-4S] cluster site is built by cysteine 71, cysteine 75, and cysteine 78. [2Fe-2S] cluster is bound by residues cysteine 115, cysteine 147, cysteine 207, and arginine 277.

The protein belongs to the radical SAM superfamily. Biotin synthase family. Homodimer. The cofactor is [4Fe-4S] cluster. Requires [2Fe-2S] cluster as cofactor.

It catalyses the reaction (4R,5S)-dethiobiotin + (sulfur carrier)-SH + 2 reduced [2Fe-2S]-[ferredoxin] + 2 S-adenosyl-L-methionine = (sulfur carrier)-H + biotin + 2 5'-deoxyadenosine + 2 L-methionine + 2 oxidized [2Fe-2S]-[ferredoxin]. It participates in cofactor biosynthesis; biotin biosynthesis; biotin from 7,8-diaminononanoate: step 2/2. Functionally, catalyzes the conversion of dethiobiotin (DTB) to biotin by the insertion of a sulfur atom into dethiobiotin via a radical-based mechanism. This Bacillus anthracis protein is Biotin synthase.